We begin with the raw amino-acid sequence, 303 residues long: NAD(+)--arginine ADP-ribosyltransferase Lart1 (303 aa).

Its subcellular location is the secreted. The enzyme catalyses L-arginyl-[protein] + NAD(+) = N(omega)-(ADP-D-ribosyl)-L-arginyl-[protein] + nicotinamide + H(+). In terms of biological role, ADP-ribosyltransferase that targets a specific class of NAD(+)-dependent glutamate dehydrogenase (GDH) enzymes found in fungi and protists, including many natural hosts of Legionella. Acts by targeting a conserved arginine residue in the NAD(+)-binding pocket of GDH, thereby blocking oxidative deamination of glutamate. Lart1 may target amoeba GDH to prevent a conserved stress response. In vitro, acts on Glud2 from the amoeba Dictyostelium discoideum (DdGluD2) and yeast Gdh2p but does not act on human or Legionella GDH homologs. This Legionella pneumophila subsp. pneumophila (strain Philadelphia 1 / ATCC 33152 / DSM 7513) protein is NAD(+)--arginine ADP-ribosyltransferase Lart1.